A 371-amino-acid chain; its full sequence is tRNA-specific 2-thiouridylase MnmA (371 aa).

ATP-binding positions include 13 to 20 (GMSGGVDS) and Met39. The interaction with target base in tRNA stretch occupies residues 99-101 (NPD). Catalysis depends on Cys104, which acts as the Nucleophile. Cys104 and Cys200 form a disulfide bridge. Gly128 provides a ligand contact to ATP. An interaction with tRNA region spans residues 150–152 (KDQ). Catalysis depends on Cys200, which acts as the Cysteine persulfide intermediate. An interaction with tRNA region spans residues 308–309 (RY).

This sequence belongs to the MnmA/TRMU family.

It is found in the cytoplasm. The catalysed reaction is S-sulfanyl-L-cysteinyl-[protein] + uridine(34) in tRNA + AH2 + ATP = 2-thiouridine(34) in tRNA + L-cysteinyl-[protein] + A + AMP + diphosphate + H(+). Functionally, catalyzes the 2-thiolation of uridine at the wobble position (U34) of tRNA, leading to the formation of s(2)U34. This chain is tRNA-specific 2-thiouridylase MnmA, found in Bacillus thuringiensis (strain Al Hakam).